A 257-amino-acid polypeptide reads, in one-letter code: Myosin-8 (257 aa).

The stretch at 1-257 (RAALQAEIEE…REVHTKISAE (257 aa)) forms a coiled coil. Ser-33, Ser-45, and Ser-58 each carry phosphoserine.

As to quaternary structure, muscle myosin is a hexameric protein that consists of 2 heavy chain subunits (MHC), 2 alkali light chain subunits (MLC) and 2 regulatory light chain subunits (MLC-2).

It is found in the cytoplasm. The protein resides in the myofibril. In terms of biological role, muscle contraction. The protein is Myosin-8 (Myh8) of Rattus norvegicus (Rat).